The following is a 177-amino-acid chain: Nucleoside triphosphate/diphosphate phosphatase (177 aa).

Arginine 23 serves as the catalytic Proton donor. Residues asparagine 87, aspartate 103, aspartate 105, aspartate 107, aspartate 120, and glutamate 123 each contribute to the Mg(2+) site.

It belongs to the Ntdp family. The cofactor is Mg(2+).

The enzyme catalyses a ribonucleoside 5'-triphosphate + H2O = a ribonucleoside 5'-diphosphate + phosphate + H(+). It carries out the reaction a ribonucleoside 5'-diphosphate + H2O = a ribonucleoside 5'-phosphate + phosphate + H(+). In terms of biological role, has nucleoside phosphatase activity towards nucleoside triphosphates and nucleoside diphosphates. In Streptococcus uberis (strain ATCC BAA-854 / 0140J), this protein is Nucleoside triphosphate/diphosphate phosphatase.